Consider the following 235-residue polypeptide: MANLVIVRHGESVANQLKTYTGWSDVALTAKGRQQAHQVGRQIKDAGFQFSHVHTSLLKRAILTSYIVLEELDQLALPMTKSWRLNERHYGALRGLNKDTTRTIFGVHQVARWRRSYTALPPLLIRSSTARRYRLVPRKSRPRGESLAQATQRLLPYWQDQVVPGLLAGQDQLIVAHGSTLRALIKVIEQISDQAIDGVEVANGEALYYQFGTDLTVLKKGRLALGSETDEEKEN.

Substrate contacts are provided by residues 8–15 (RHGESVAN), 21–22 (TG), R60, 87–90 (ERHY), K98, and 114–115 (RR). The active-site Tele-phosphohistidine intermediate is H9. E87 acts as the Proton donor/acceptor in catalysis.

This sequence belongs to the phosphoglycerate mutase family. BPG-dependent PGAM subfamily.

The enzyme catalyses (2R)-2-phosphoglycerate = (2R)-3-phosphoglycerate. It functions in the pathway carbohydrate degradation; glycolysis; pyruvate from D-glyceraldehyde 3-phosphate: step 3/5. Its function is as follows. Catalyzes the interconversion of 2-phosphoglycerate and 3-phosphoglycerate. The chain is 2,3-bisphosphoglycerate-dependent phosphoglycerate mutase 1 from Latilactobacillus sakei subsp. sakei (strain 23K) (Lactobacillus sakei subsp. sakei).